Here is a 362-residue protein sequence, read N- to C-terminus: MPQNVVLPGPAPWGFRLSGGIDFNQPLVITRITPGSKAEAANLCPGDVILAIDGFGTESMTHADAQDRIKAASYQLCLKIDRAETRLCPAVSEDGKAHPFKINLEAEPQDVNYFEHKHNIRPKPFIIPGRTSGCSTPSGIDCGSGRSTPSSVSTVSTICPGDLKVAAKMAPNIPLEMELPGVKIVHAQFNTPMQLYSDDNIMETLQGQVSTALGETPSMSEPTASVPPQSDVYRMLHDNRDEPAAPRQSGSFRVLQELVNDGSDDRPAGTRSVRPVTKVHGGAGGAQRMPLCDKCGSGIVGAVVKARDKYRHPECFVCADCNLNLKQKGYFFVEGELYCEMHARARTRPPEGYDTVTLYPKA.

Residues 1-84 (MPQNVVLPGP…QLCLKIDRAE (84 aa)) form the PDZ domain. 3 positions are modified to phosphoserine: Ser18, Ser92, and Ser263. The segment at 261-282 (DGSDDRPAGTRSVRPVTKVHGG) is disordered. The LIM zinc-binding domain occupies 290–349 (PLCDKCGSGIVGAVVKARDKYRHPECFVCADCNLNLKQKGYFFVEGELYCEMHARARTRP).

In terms of assembly, interacts with ACTN2. Forms a heterodimer with PDLIM4 (via LIM domain). As to expression, highly expressed in skeletal muscle and at low levels in the heart.

The protein resides in the cytoplasm. It is found in the myofibril. The protein localises to the sarcomere. It localises to the z line. May play a role in the organization of actin filament arrays within muscle cells. This chain is PDZ and LIM domain protein 3 (Pdlim3), found in Rattus norvegicus (Rat).